Here is a 69-residue protein sequence, read N- to C-terminus: Large ribosomal subunit protein uL29 (69 aa).

This sequence belongs to the universal ribosomal protein uL29 family.

This Carboxydothermus hydrogenoformans (strain ATCC BAA-161 / DSM 6008 / Z-2901) protein is Large ribosomal subunit protein uL29.